The sequence spans 288 residues: UTP--glucose-1-phosphate uridylyltransferase (288 aa).

Belongs to the UDPGP type 2 family.

It catalyses the reaction alpha-D-glucose 1-phosphate + UTP + H(+) = UDP-alpha-D-glucose + diphosphate. Its pathway is glycolipid metabolism; diglucosyl-diacylglycerol biosynthesis. Catalyzes the formation of UDP-glucose from glucose-1-phosphate and UTP. This is an intermediate step in the biosynthesis of diglucosyl-diacylglycerol (Glc2-DAG), i.e. a glycolipid found in the membrane, which is also used as a membrane anchor for lipoteichoic acid (LTA). The chain is UTP--glucose-1-phosphate uridylyltransferase (gtaB) from Staphylococcus haemolyticus (strain JCSC1435).